Reading from the N-terminus, the 165-residue chain is MIIEGPVIKFGDKIDTDIIIPARYLKYTDPQYLAQHAMEPLDPEFYKKASKGVIIVAGKVFGMGSSREQAAIALKAAGVKAVVAESFARIFYRNAINNGLPVITLPNSTKEIDESSYVKIDVETGEILVGNKVLKGKGITGMALEILQAGGIMEYLKKMQTVNRN.

It belongs to the LeuD family. LeuD type 2 subfamily. In terms of assembly, heterodimer of LeuC and LeuD.

The enzyme catalyses (2R,3S)-3-isopropylmalate = (2S)-2-isopropylmalate. The protein operates within amino-acid biosynthesis; L-leucine biosynthesis; L-leucine from 3-methyl-2-oxobutanoate: step 2/4. In terms of biological role, catalyzes the isomerization between 2-isopropylmalate and 3-isopropylmalate, via the formation of 2-isopropylmaleate. The chain is 3-isopropylmalate dehydratase small subunit from Saccharolobus islandicus (strain M.16.27) (Sulfolobus islandicus).